Here is a 356-residue protein sequence, read N- to C-terminus: Phosphotriesterase-related protein (356 aa).

A divalent metal cation-binding residues include H23, H25, E175, H207, H236, and D304.

The protein belongs to the metallo-dependent hydrolases superfamily. Phosphotriesterase family. Requires a divalent metal cation as cofactor.

This is Phosphotriesterase-related protein from Aedes aegypti (Yellowfever mosquito).